The sequence spans 161 residues: uncharacterized protein (161 aa).

The span at 1-16 shows a compositional bias: low complexity; sequence MPRAGRAPAEGGPAPG. Disordered stretches follow at residues 1 to 23, 50 to 91, and 140 to 161; these read MPRA…SRCL, GRPV…TQSA, and RGPA…WRIS.

This is an uncharacterized protein from Homo sapiens (Human).